A 237-amino-acid polypeptide reads, in one-letter code: Sugar fermentation stimulation protein homolog (237 aa).

Belongs to the SfsA family.

This is Sugar fermentation stimulation protein homolog from Actinobacillus pleuropneumoniae serotype 3 (strain JL03).